A 232-amino-acid chain; its full sequence is Large ribosomal subunit protein uL1 (232 aa).

The protein belongs to the universal ribosomal protein uL1 family. In terms of assembly, part of the 50S ribosomal subunit.

Binds directly to 23S rRNA. The L1 stalk is quite mobile in the ribosome, and is involved in E site tRNA release. Its function is as follows. Protein L1 is also a translational repressor protein, it controls the translation of the L11 operon by binding to its mRNA. This chain is Large ribosomal subunit protein uL1, found in Dinoroseobacter shibae (strain DSM 16493 / NCIMB 14021 / DFL 12).